Here is a 169-residue protein sequence, read N- to C-terminus: Lipoprotein signal peptidase (169 aa).

The Cytoplasmic segment spans residues 1 to 9 (MPDVDRFGR). Residues 10–30 (LPWLWITVLVFVLDQVSKAFF) form a helical membrane-spanning segment. The Periplasmic portion of the chain corresponds to 31 to 67 (QAELSMYQQIVVIPDLFSWTLAYNTGAAFSFLADSSG). Residues 68-89 (WQRWLFALIAIVVSASLVVWLK) form a helical membrane-spanning segment. Residues 90-96 (RLKKGET) lie on the Cytoplasmic side of the membrane. The chain crosses the membrane as a helical span at residues 97-118 (WLAIALALVLGGALGNLYDRMV). Residues 119-140 (LGHVVDFILVHWQNRWYFPAFN) lie on the Periplasmic side of the membrane. Residues aspartate 124 and aspartate 143 contribute to the active site. The chain crosses the membrane as a helical span at residues 141 to 154 (LADSAITVGAVMLA). The Cytoplasmic portion of the chain corresponds to 155–169 (LDMFRSKKSGEAAHG).

The protein belongs to the peptidase A8 family. Monomer in the crystal.

Its subcellular location is the cell inner membrane. It carries out the reaction Release of signal peptides from bacterial membrane prolipoproteins. Hydrolyzes -Xaa-Yaa-Zaa-|-(S,diacylglyceryl)Cys-, in which Xaa is hydrophobic (preferably Leu), and Yaa (Ala or Ser) and Zaa (Gly or Ala) have small, neutral side chains.. Its pathway is protein modification; lipoprotein biosynthesis (signal peptide cleavage). Its activity is regulated as follows. Inhibited by globomycin. Its function is as follows. This protein specifically catalyzes the removal of signal peptides from prolipoproteins. In Pseudomonas aeruginosa (strain ATCC 15692 / DSM 22644 / CIP 104116 / JCM 14847 / LMG 12228 / 1C / PRS 101 / PAO1), this protein is Lipoprotein signal peptidase.